Reading from the N-terminus, the 220-residue chain is Guanylate kinase (220 aa).

The region spanning 15–194 (GLMLVISSPS…AFEGIEAIVK (180 aa)) is the Guanylate kinase-like domain. 22–29 (SPSGAGKS) lines the ATP pocket.

The protein belongs to the guanylate kinase family.

It is found in the cytoplasm. The enzyme catalyses GMP + ATP = GDP + ADP. In terms of biological role, essential for recycling GMP and indirectly, cGMP. This Agrobacterium fabrum (strain C58 / ATCC 33970) (Agrobacterium tumefaciens (strain C58)) protein is Guanylate kinase.